The sequence spans 296 residues: ADP-dependent (S)-NAD(P)H-hydrate dehydratase (296 aa).

In terms of domain architecture, YjeF C-terminal spans 18 to 292 (TALRFPHVFK…PAARWLRNRI (275 aa)). Positions 53, 113, and 165 each coordinate (6S)-NADPHX. Residues 202–206 (KGHKT) and G231 contribute to the AMP site. D232 serves as a coordination point for (6S)-NADPHX.

This sequence belongs to the NnrD/CARKD family. As to quaternary structure, homotetramer. The cofactor is Mg(2+).

The enzyme catalyses (6S)-NADHX + ADP = AMP + phosphate + NADH + H(+). It carries out the reaction (6S)-NADPHX + ADP = AMP + phosphate + NADPH + H(+). In terms of biological role, catalyzes the dehydration of the S-form of NAD(P)HX at the expense of ADP, which is converted to AMP. Together with NAD(P)HX epimerase, which catalyzes the epimerization of the S- and R-forms, the enzyme allows the repair of both epimers of NAD(P)HX, a damaged form of NAD(P)H that is a result of enzymatic or heat-dependent hydration. The sequence is that of ADP-dependent (S)-NAD(P)H-hydrate dehydratase from Neisseria meningitidis serogroup B (strain ATCC BAA-335 / MC58).